The primary structure comprises 406 residues: Cysteine desulfurase (406 aa).

The residue at position 226 (Lys226) is an N6-(pyridoxal phosphate)lysine. Cys364 functions as the Cysteine persulfide intermediate in the catalytic mechanism.

Belongs to the class-V pyridoxal-phosphate-dependent aminotransferase family. Csd subfamily. In terms of assembly, homodimer. Interacts with SufE and the SufBCD complex composed of SufB, SufC and SufD. The interaction with SufE is required to mediate the direct transfer of the sulfur atom from the S-sulfanylcysteine. It depends on pyridoxal 5'-phosphate as a cofactor.

Its subcellular location is the cytoplasm. It carries out the reaction (sulfur carrier)-H + L-cysteine = (sulfur carrier)-SH + L-alanine. The enzyme catalyses L-selenocysteine + AH2 = hydrogenselenide + L-alanine + A + H(+). The protein operates within cofactor biosynthesis; iron-sulfur cluster biosynthesis. Functionally, cysteine desulfurases mobilize the sulfur from L-cysteine to yield L-alanine, an essential step in sulfur metabolism for biosynthesis of a variety of sulfur-containing biomolecules. Component of the suf operon, which is activated and required under specific conditions such as oxidative stress and iron limitation. Acts as a potent selenocysteine lyase in vitro, that mobilizes selenium from L-selenocysteine. Selenocysteine lyase activity is however unsure in vivo. This Escherichia coli O45:K1 (strain S88 / ExPEC) protein is Cysteine desulfurase.